Consider the following 1939-residue polypeptide: Myosin-2 (1939 aa).

One can recognise a Myosin N-terminal SH3-like domain in the interval 33–82; that stretch reads DAKTSVFVAEPKESFVKGTIQSREGGKVTVKTEAGATLTVKEDQVFPMNP. Phosphothreonine occurs at positions 64 and 69. Residues 86-782 enclose the Myosin motor domain; that stretch reads DKIEDMAMMT…LLGLLEEMRD (697 aa). Lys130 is subject to N6,N6,N6-trimethyllysine. 179-186 is a binding site for ATP; it reads GESGAGKT. At Tyr389 the chain carries Phosphotyrosine. Residue Ser392 is modified to Phosphoserine. Thr419 is subject to Phosphothreonine. A Phosphoserine modification is found at Ser625. Positions 659–681 are actin-binding; the sequence is LNKLMTNLRSTHPHFVRCIIPNE. The residue at position 757 (His757) is a Pros-methylhistidine. The tract at residues 761–775 is actin-binding; sequence KFGHTKVFFKAGLLG. The IQ domain occupies 785 to 814; the sequence is LAQLITRTQARCRGFLARVEYQKMVERRES. The stretch at 843–1939 forms a coiled coil; it reads LLKSAESEKE…EVHTKVISEE (1097 aa). Phosphoserine occurs at positions 1092 and 1096. 2 disordered regions span residues 1126 to 1147 and 1153 to 1172; these read IEAERASRAKAEKQRSDLSREL and RLEEAGGATSAQIEMNKKRE. Positions 1128–1147 are enriched in basic and acidic residues; the sequence is AERASRAKAEKQRSDLSREL. A phosphoserine mark is found at Ser1162 and Ser1237. Residue Thr1241 is modified to Phosphothreonine. Ser1243 bears the Phosphoserine mark. Phosphothreonine is present on Thr1255. Residue Ser1261 is modified to Phosphoserine. Position 1286 is a phosphothreonine (Thr1286). 4 positions are modified to phosphoserine: Ser1288, Ser1292, Ser1303, and Ser1306. Phosphotyrosine is present on Tyr1464. Thr1467 bears the Phosphothreonine mark. Position 1474 is a phosphoserine (Ser1474). Position 1492 is a phosphotyrosine (Tyr1492). Ser1495 is modified (phosphoserine). Phosphothreonine is present on Thr1501. Ser1514 is subject to Phosphoserine. At Thr1517 the chain carries Phosphothreonine. Phosphoserine is present on residues Ser1542, Ser1554, Ser1574, Ser1600, Ser1603, Ser1714, and Ser1726. Residues Thr1730 and Thr1736 each carry the phosphothreonine modification. Ser1739 carries the phosphoserine modification. Positions 1885 to 1915 are disordered; the sequence is QAEEAEEQSNTNLSKFRKLQHELEEAEERAD.

Belongs to the TRAFAC class myosin-kinesin ATPase superfamily. Myosin family. As to quaternary structure, muscle myosin is a hexameric protein that consists of 2 heavy chain subunits (MHC), 2 alkali light chain subunits (MLC) and 2 regulatory light chain subunits (MLC-2). Interacts with GCSAM.

The protein localises to the cytoplasm. The protein resides in the myofibril. In terms of biological role, myosins are actin-based motor molecules with ATPase activity essential for muscle contraction. This chain is Myosin-2 (MYH2), found in Sus scrofa (Pig).